The sequence spans 547 residues: Chaperonin GroEL 1 (547 aa).

ATP is bound by residues 30 to 33, K51, 87 to 91, G415, 479 to 481, and D495; these read TLGP, DGTTT, and NAA.

This sequence belongs to the chaperonin (HSP60) family. In terms of assembly, forms a cylinder of 14 subunits composed of two heptameric rings stacked back-to-back. Interacts with the co-chaperonin GroES.

The protein resides in the cytoplasm. The enzyme catalyses ATP + H2O + a folded polypeptide = ADP + phosphate + an unfolded polypeptide.. Functionally, together with its co-chaperonin GroES, plays an essential role in assisting protein folding. The GroEL-GroES system forms a nano-cage that allows encapsulation of the non-native substrate proteins and provides a physical environment optimized to promote and accelerate protein folding. This Vibrio parahaemolyticus serotype O3:K6 (strain RIMD 2210633) protein is Chaperonin GroEL 1.